Consider the following 209-residue polypeptide: Guanylate kinase (209 aa).

Positions 5–184 constitute a Guanylate kinase-like domain; that stretch reads GLLIVFSGPS…AAERVKRVIE (180 aa). 12-19 provides a ligand contact to ATP; the sequence is GPSGVGKG.

This sequence belongs to the guanylate kinase family.

It is found in the cytoplasm. It carries out the reaction GMP + ATP = GDP + ADP. In terms of biological role, essential for recycling GMP and indirectly, cGMP. The sequence is that of Guanylate kinase from Streptococcus thermophilus (strain CNRZ 1066).